The sequence spans 426 residues: Enolase (426 aa).

Residue Q162 coordinates (2R)-2-phosphoglycerate. The active-site Proton donor is E204. 3 residues coordinate Mg(2+): D241, E288, and D315. Positions 340, 369, 370, and 391 each coordinate (2R)-2-phosphoglycerate. K340 functions as the Proton acceptor in the catalytic mechanism.

It belongs to the enolase family. It depends on Mg(2+) as a cofactor.

The protein localises to the cytoplasm. The protein resides in the secreted. It localises to the cell surface. It carries out the reaction (2R)-2-phosphoglycerate = phosphoenolpyruvate + H2O. It participates in carbohydrate degradation; glycolysis; pyruvate from D-glyceraldehyde 3-phosphate: step 4/5. Catalyzes the reversible conversion of 2-phosphoglycerate (2-PG) into phosphoenolpyruvate (PEP). It is essential for the degradation of carbohydrates via glycolysis. This chain is Enolase, found in Bacteroides thetaiotaomicron (strain ATCC 29148 / DSM 2079 / JCM 5827 / CCUG 10774 / NCTC 10582 / VPI-5482 / E50).